Here is a 159-residue protein sequence, read N- to C-terminus: NADH dehydrogenase [ubiquinone] 1 beta subcomplex subunit 10 (159 aa).

The protein belongs to the complex I NDUFB10 subunit family. Complex I is composed of 45 different subunits.

It is found in the mitochondrion inner membrane. In terms of biological role, accessory subunit of the mitochondrial membrane respiratory chain NADH dehydrogenase (Complex I), that is believed not to be involved in catalysis. Complex I functions in the transfer of electrons from NADH to the respiratory chain. The immediate electron acceptor for the enzyme is believed to be ubiquinone. This Bombyx mori (Silk moth) protein is NADH dehydrogenase [ubiquinone] 1 beta subcomplex subunit 10.